The chain runs to 348 residues: Rhodopsin (348 aa).

Met1 is modified (N-acetylmethionine). The Extracellular portion of the chain corresponds to 1–36; sequence MNGTEGPNFYVPFSNATGVVRSPFEYPQYYLAEPWQ. N-linked (GlcNAc...) asparagine glycans are attached at residues Asn2 and Asn15. A helical transmembrane segment spans residues 37 to 61; it reads FSMLAAYMFLLIVLGFPINFLTLYV. Over 62 to 73 the chain is Cytoplasmic; it reads TVQHKKLRTPLN. A helical transmembrane segment spans residues 74-96; that stretch reads YILLNLAVADLFMVFGGFTTTLY. At 97–110 the chain is on the extracellular side; it reads TSLHGYFVFGPTGC. A disulfide bond links Cys110 and Cys187. Residues 111–133 form a helical membrane-spanning segment; the sequence is NLEGFFATLGGEIALWSLVVLAI. The 'Ionic lock' involved in activated form stabilization signature appears at 134–136; sequence ERY. Residues 134 to 152 lie on the Cytoplasmic side of the membrane; it reads ERYVVICKPMSNFRFGENH. A helical membrane pass occupies residues 153–173; sequence AIMGVVFTWIMALACAAPPLV. Over 174–202 the chain is Extracellular; that stretch reads GWSRYIPEGMQCSCGVDYYTLKPEVNNES. Glu201 contributes to the Zn(2+) binding site. The chain crosses the membrane as a helical span at residues 203 to 224; it reads FVIYMFVVHFTIPLIVIFFCYG. The Cytoplasmic portion of the chain corresponds to 225 to 252; it reads QLVFTVKEAAAQQQESATTQKAEKEVTR. The chain crosses the membrane as a helical span at residues 253–274; sequence MVILMVVFFLICWFPYAGVAFY. The Extracellular segment spans residues 275-286; it reads IFTHQGSNFGPI. Gln279 contacts Zn(2+). The helical transmembrane segment at 287-308 threads the bilayer; it reads FMTLPAFFAKSSSIYNPVIYIM. The residue at position 296 (Lys296) is an N6-(retinylidene)lysine. Over 309–348 the chain is Cytoplasmic; sequence MNKQFRNCMLTTLCCGKNILGDDEASATASKTETSQVAPA. S-palmitoyl cysteine attachment occurs at residues Cys322 and Cys323. Residues 330–348 are interaction with SAG; the sequence is DDEASATASKTETSQVAPA. The residue at position 334 (Ser334) is a Phosphoserine. Thr336 is subject to Phosphothreonine. Position 338 is a phosphoserine (Ser338). Phosphothreonine is present on residues Thr340 and Thr342. A Phosphoserine modification is found at Ser343.

It belongs to the G-protein coupled receptor 1 family. Opsin subfamily. As to quaternary structure, homodimer. May form a complex composed of RHO, GRK1 and RCVRN in a Ca(2+)-dependent manner; RCVRN prevents the interaction between GRK1 and RHO. Interacts with GRK1. Interacts (phosphorylated form) with SAG. Interacts with GNAT1. Interacts with GNAT3. SAG and G-proteins compete for a common binding site. Interacts with PRCD; the interaction promotes PRCD stability. Forms a complex with ASAP1 and ARF4. Forms a complex with ASAP1, RAB11A, Rabin8/RAB3IP, ARF4 and RAB11FIP3; the complex regulates Golgi-to-cilia rhodopsin/RHO transport in photoreceptors. Phosphorylated on some or all of the serine and threonine residues present in the C-terminal region. Post-translationally, contains one covalently linked retinal chromophore. Upon light absorption, the covalently bound 11-cis-retinal is converted to all-trans-retinal. After hydrolysis of the Schiff base and release of the covalently bound all-trans-retinal, active rhodopsin is regenerated by binding of a fresh molecule of 11-cis-retinal.

Its subcellular location is the membrane. It is found in the cell projection. It localises to the cilium. The protein localises to the photoreceptor outer segment. Its function is as follows. Photoreceptor required for image-forming vision at low light intensity. Required for photoreceptor cell viability after birth. Light-induced isomerization of 11-cis to all-trans retinal triggers a conformational change that activates signaling via G-proteins. Subsequent receptor phosphorylation mediates displacement of the bound G-protein alpha subunit by the arrestin SAG and terminates signaling. This Cricetulus griseus (Chinese hamster) protein is Rhodopsin (RHO).